Consider the following 579-residue polypeptide: L-ascorbate oxidase (579 aa).

An N-terminal signal peptide occupies residues 1–30; it reads MLQMGKAREPNFLILFFFGLILAFGISSEG. Plastocyanin-like domains follow at residues 33 to 152 and 164 to 330; these read IRHY…LIVD and DGEI…NYLP. 3 disulfides stabilise this stretch: cysteine 49/cysteine 231, cysteine 111/cysteine 568, and cysteine 210/cysteine 223. Positions 90 and 92 each coordinate Cu cation. Asparagine 122 carries an N-linked (GlcNAc...) asparagine glycan. Cu cation contacts are provided by histidine 134 and histidine 136. Residues asparagine 355 and asparagine 470 are each glycosylated (N-linked (GlcNAc...) asparagine). The region spanning 374–553 is the Plastocyanin-like 3 domain; the sequence is NRRIFLLNTQ…HMGMGVVFAE (180 aa). Residues histidine 475, histidine 478, histidine 480, histidine 536, cysteine 537, histidine 538, histidine 542, and methionine 547 each contribute to the Cu cation site.

Belongs to the multicopper oxidase family. As to quaternary structure, dimer. Cu cation is required as a cofactor.

Its subcellular location is the secreted. It carries out the reaction 4 L-ascorbate + O2 = 4 monodehydro-L-ascorbate radical + 2 H2O. May be involved in a redox system involving ascorbic acid. The protein is L-ascorbate oxidase (AAO) of Cucurbita maxima (Pumpkin).